Consider the following 263-residue polypeptide: Mediator of RNA polymerase II transcription subunit 4 (263 aa).

Residues 62–106 (QLAAEQAGIEKKMDGLREQVKEQDEEINQLQKQLKEAEHILATSI) adopt a coiled-coil conformation. A disordered region spans residues 221-263 (LHMTMGAGAGSVSLDTRSHKDASQDDVEVMSTDSSSSSSSDSQ). A compositionally biased stretch (low complexity) spans 251–263 (STDSSSSSSSDSQ).

It belongs to the Mediator complex subunit 4 family. Component of the Mediator complex.

The protein resides in the nucleus. Its function is as follows. Component of the Mediator complex, a coactivator involved in the regulated transcription of nearly all RNA polymerase II-dependent genes. Mediator functions as a bridge to convey information from gene-specific regulatory proteins to the basal RNA polymerase II transcription machinery. Mediator is recruited to promoters by direct interactions with regulatory proteins and serves as a scaffold for the assembly of a functional preinitiation complex with RNA polymerase II and the general transcription factors. In Aedes aegypti (Yellowfever mosquito), this protein is Mediator of RNA polymerase II transcription subunit 4 (MED4).